The primary structure comprises 141 residues: Hemoglobin subunit alpha (141 aa).

One can recognise a Globin domain in the interval valine 1–arginine 141. At serine 3 the chain carries Phosphoserine. N6-succinyllysine occurs at positions 7 and 11. N6-acetyllysine; alternate is present on lysine 16. Lysine 16 bears the N6-succinyllysine; alternate mark. Tyrosine 24 bears the Phosphotyrosine mark. A Phosphoserine modification is found at serine 35. Lysine 40 is modified (N6-succinyllysine). The residue at position 49 (serine 49) is a Phosphoserine. Histidine 58 serves as a coordination point for O2. Histidine 87 contacts heme b. Serine 102 is modified (phosphoserine). Threonine 108 carries the phosphothreonine modification. Serine 124 is modified (phosphoserine). Phosphothreonine is present on residues threonine 134 and threonine 137. Position 138 is a phosphoserine (serine 138).

The protein belongs to the globin family. In terms of assembly, heterotetramer of two alpha chains and two beta chains. Red blood cells.

Involved in oxygen transport from the lung to the various peripheral tissues. Its function is as follows. Hemopressin acts as an antagonist peptide of the cannabinoid receptor CNR1. Hemopressin-binding efficiently blocks cannabinoid receptor CNR1 and subsequent signaling. The chain is Hemoglobin subunit alpha (HBA) from Macropus giganteus (Eastern gray kangaroo).